The following is a 272-amino-acid chain: Dioscorin DB3L (272 aa).

Positions 1-25 (MSSSTLFHLFLLSSLLFSCLSNARP) are cleaved as a signal peptide. Residues 28 to 263 (DDFSYIEGSP…LKFRTIFFYP (236 aa)) enclose the Alpha-carbonic anhydrase domain. A disulfide bond links Cys53 and Cys213.

Belongs to the alpha-class carbonic anhydrase family. As to quaternary structure, homodimer; disulfide-linked. Not glycosylated. Expressed in tuber (at protein level).

Loss of hemagglutinating activity by EDTA treatment. The activity is fully recovered by the addition of 5 mM Ca(2+) ions, but not with Mg(2+) and Mn 2(+). Hemagglutination activity is inhibited by maltose and its derivatives, with maltopentaose and maltohexaose being the best inhibitors followed by maltose and iso maltose. Not inhibited by glycoproteins. Functionally, maltose-binding lectin. No affinity is detected toward glucose. Has hemagglutinating activity against rabbit erythrocytes at 3.9 ug/ml. No carbonate dehydratase or trypsin inhibitor activity detected by measuring the hydrolysis of 4-nitrophenyl acetate or the inhibition of bovine trypsin-catalyzed hydrolysis of N-benzoyl-L-arginine ethyl ester, respectively. The protein is Dioscorin DB3L of Dioscorea polystachya (Chinese yam).